We begin with the raw amino-acid sequence, 1068 residues long: Carbamoyl phosphate synthase large chain (1068 aa).

Residues 1 to 401 (MPLNKDIKKV…AFLKGIRSLE (401 aa)) form a carboxyphosphate synthetic domain region. Residues R129, R169, G175, G176, K208, V210, E215, G241, I242, H243, Q284, and E298 each coordinate ATP. Residues 133–327 (RNVMSRINEP…IAKVAAKIAL (195 aa)) enclose the ATP-grasp 1 domain. Positions 284, 298, and 300 each coordinate Mg(2+). Residues Q284, E298, and N300 each contribute to the Mn(2+) site. Positions 402–549 (IGKYSLEHKK…YSTYDVYDEV (148 aa)) are oligomerization domain. Residues 550–932 (EVSKNKKVIV…ALYKGFIGAN (383 aa)) are carbamoyl phosphate synthetic domain. The region spanning 674–864 (DELLEKLQIS…IVDIATRVML (191 aa)) is the ATP-grasp 2 domain. The ATP site is built by R710, K749, L751, E755, G780, V781, H782, S783, Q823, and E835. The Mg(2+) site is built by Q823, E835, and N837. Q823, E835, and N837 together coordinate Mn(2+). Residues 933–1068 (MSIKKEKGTI…ETLHIFDLSN (136 aa)) form the MGS-like domain. Residues 933–1068 (MSIKKEKGTI…ETLHIFDLSN (136 aa)) form an allosteric domain region.

This sequence belongs to the CarB family. Composed of two chains; the small (or glutamine) chain promotes the hydrolysis of glutamine to ammonia, which is used by the large (or ammonia) chain to synthesize carbamoyl phosphate. Tetramer of heterodimers (alpha,beta)4. It depends on Mg(2+) as a cofactor. The cofactor is Mn(2+).

It catalyses the reaction hydrogencarbonate + L-glutamine + 2 ATP + H2O = carbamoyl phosphate + L-glutamate + 2 ADP + phosphate + 2 H(+). It carries out the reaction hydrogencarbonate + NH4(+) + 2 ATP = carbamoyl phosphate + 2 ADP + phosphate + 2 H(+). The protein operates within amino-acid biosynthesis; L-arginine biosynthesis; carbamoyl phosphate from bicarbonate: step 1/1. Its pathway is pyrimidine metabolism; UMP biosynthesis via de novo pathway; (S)-dihydroorotate from bicarbonate: step 1/3. In terms of biological role, large subunit of the glutamine-dependent carbamoyl phosphate synthetase (CPSase). CPSase catalyzes the formation of carbamoyl phosphate from the ammonia moiety of glutamine, carbonate, and phosphate donated by ATP, constituting the first step of 2 biosynthetic pathways, one leading to arginine and/or urea and the other to pyrimidine nucleotides. The large subunit (synthetase) binds the substrates ammonia (free or transferred from glutamine from the small subunit), hydrogencarbonate and ATP and carries out an ATP-coupled ligase reaction, activating hydrogencarbonate by forming carboxy phosphate which reacts with ammonia to form carbamoyl phosphate. This is Carbamoyl phosphate synthase large chain from Clostridium botulinum (strain Loch Maree / Type A3).